The sequence spans 212 residues: Redox-sensing transcriptional repressor Rex (212 aa).

A DNA-binding region (H-T-H motif) is located at residues 17 to 56 (LYARSLRYLLEEGIHSVSSQELGERINVTAAQIRKDLSYF). 91–96 (GIGLLG) provides a ligand contact to NAD(+).

Belongs to the transcriptional regulatory Rex family. Homodimer.

It is found in the cytoplasm. Functionally, modulates transcription in response to changes in cellular NADH/NAD(+) redox state. The polypeptide is Redox-sensing transcriptional repressor Rex (Chloroflexus aggregans (strain MD-66 / DSM 9485)).